Reading from the N-terminus, the 156-residue chain is Persephin (156 aa).

A signal peptide spans 1–21 (MAAGRLRILCLLLLSLHPSLG). Disulfide bonds link C66/C124, C93/C152, and C97/C154.

Belongs to the TGF-beta family. GDNF subfamily. Homodimer; disulfide-linked. Interacts with GFRA4 coreceptor and RET: forms a 2:2:2 ternary complex composed of PSPN ligand, GFRA4 and RET receptor.

The protein localises to the secreted. Growth factor that exhibits neurotrophic activity on mesencephalic dopaminergic and motor neurons. Acts by binding to its coreceptor, GFRA4, leading to autophosphorylation and activation of the RET receptor. This chain is Persephin, found in Mus musculus (Mouse).